A 256-amino-acid polypeptide reads, in one-letter code: Complex I assembly factor TIMMDC1, mitochondrial (256 aa).

The tract at residues 1-27 (MAQSDPPKSPDPPLPTSIRNPQTPESG) is disordered. Transmembrane regions (helical) follow at residues 111 to 131 (WGWR…GLTV) and 159 to 179 (VGLL…GALI).

The protein belongs to the Tim17/Tim22/Tim23 family. As to quaternary structure, associates with the intermediate 315 kDa subcomplex of incompletely assembled complex I.

It is found in the mitochondrion membrane. Functionally, chaperone protein involved in the assembly of the mitochondrial NADH:ubiquinone oxidoreductase complex (complex I). Participates in constructing the membrane arm of complex I. This Xenopus laevis (African clawed frog) protein is Complex I assembly factor TIMMDC1, mitochondrial (timmdc1).